We begin with the raw amino-acid sequence, 306 residues long: tRNA dimethylallyltransferase 2 (306 aa).

Residue 11 to 18 (GPTASGKT) coordinates ATP. Residue 13–18 (TASGKT) participates in substrate binding. Residues 36–39 (DSRQ) are interaction with substrate tRNA.

Belongs to the IPP transferase family. In terms of assembly, monomer. It depends on Mg(2+) as a cofactor.

The enzyme catalyses adenosine(37) in tRNA + dimethylallyl diphosphate = N(6)-dimethylallyladenosine(37) in tRNA + diphosphate. In terms of biological role, catalyzes the transfer of a dimethylallyl group onto the adenine at position 37 in tRNAs that read codons beginning with uridine, leading to the formation of N6-(dimethylallyl)adenosine (i(6)A). The protein is tRNA dimethylallyltransferase 2 of Bacteroides thetaiotaomicron (strain ATCC 29148 / DSM 2079 / JCM 5827 / CCUG 10774 / NCTC 10582 / VPI-5482 / E50).